The primary structure comprises 306 residues: N-acetylmuramic acid 6-phosphate etherase (306 aa).

An SIS domain is found at 59-222 (TSQALAKGGR…STGTMVMLGK (164 aa)). Glu87 acts as the Proton donor in catalysis. Glu118 is an active-site residue.

This sequence belongs to the GCKR-like family. MurNAc-6-P etherase subfamily. In terms of assembly, homodimer.

The catalysed reaction is N-acetyl-D-muramate 6-phosphate + H2O = N-acetyl-D-glucosamine 6-phosphate + (R)-lactate. The protein operates within amino-sugar metabolism; N-acetylmuramate degradation. Specifically catalyzes the cleavage of the D-lactyl ether substituent of MurNAc 6-phosphate, producing GlcNAc 6-phosphate and D-lactate. In Microcystis aeruginosa (strain NIES-843 / IAM M-2473), this protein is N-acetylmuramic acid 6-phosphate etherase.